We begin with the raw amino-acid sequence, 159 residues long: Ribosomal RNA large subunit methyltransferase H (159 aa).

Residues Leu76, Gly108, and 127 to 132 (FGLLTL) contribute to the S-adenosyl-L-methionine site.

It belongs to the RNA methyltransferase RlmH family. In terms of assembly, homodimer.

Its subcellular location is the cytoplasm. The catalysed reaction is pseudouridine(1915) in 23S rRNA + S-adenosyl-L-methionine = N(3)-methylpseudouridine(1915) in 23S rRNA + S-adenosyl-L-homocysteine + H(+). Its function is as follows. Specifically methylates the pseudouridine at position 1915 (m3Psi1915) in 23S rRNA. The chain is Ribosomal RNA large subunit methyltransferase H from Streptococcus pyogenes serotype M3 (strain SSI-1).